A 637-amino-acid chain; its full sequence is Biosynthetic arginine decarboxylase (637 aa).

Lys-101 carries the N6-(pyridoxal phosphate)lysine modification. 286–296 contributes to the substrate binding site; that stretch reads FDVGGGLAVDY.

This sequence belongs to the Orn/Lys/Arg decarboxylase class-II family. SpeA subfamily. The cofactor is Mg(2+). Requires pyridoxal 5'-phosphate as cofactor.

The catalysed reaction is L-arginine + H(+) = agmatine + CO2. It participates in amine and polyamine biosynthesis; agmatine biosynthesis; agmatine from L-arginine: step 1/1. Catalyzes the biosynthesis of agmatine from arginine. In Shewanella sediminis (strain HAW-EB3), this protein is Biosynthetic arginine decarboxylase.